The following is a 407-amino-acid chain: MATTKTGSLTIAGSGIASVAHITLEVLSYLQEADKIYYAIVDPVTEAFIQDKSKGRCFDLRVYYDKDKMRSETYVQMSEVMLRDVRSGYNVLAIFYGHPGVFVCPTHRAISIARSEGYTAKMLPGVSAEDYMFSDIGFDPAVPGCMTQEATSLLIYNKQLDPSVHNIIWQVGSVGVDNMVFDNKQFHLLVDHLERDFGSIHKVIHYVGAIMPQSATVMDEYTISDLRKEDVVKKFTTTSTLYIPPREIAPVDQRIMQALEFSGNGDRYMALSQLRGVHARNSGLCAYGPAEQAAVDKLDHHTPPDDYEVLRASPAIRRFTEDLALKPDLRSRYKEDPLSVLDAIPGLTSQEKFALSFDKPGPVYKVMRATPAAIAAGQEHSLDEIAGSADSESPGALATTIVVIVHI.

A methyltransferase domain region spans residues 1–246; sequence MATTKTGSLT…TTSTLYIPPR (246 aa). Active-site residues include arginine 70, tyrosine 74, and tyrosine 96. Residues tyrosine 96, histidine 98, valine 101, alanine 128, glutamine 170, glycine 208, serine 239, and threonine 240 each contribute to the S-adenosyl-L-methionine site. A clasp domain region spans residues 247–370; sequence EIAPVDQRIM…GPVYKVMRAT (124 aa). The interval 371-393 is precursor leader; sequence PAAIAAGQEHSLDEIAGSADSES. 2 positions are modified to N-methylthreonine: threonine 399 and threonine 400. N-methylisoleucine is present on isoleucine 401. 2 positions are modified to N-methylvaline: valine 402 and valine 403. Isoleucine 404 is modified (N-methylisoleucine). An N-methylvaline modification is found at valine 405. N-methylhistidine is present on histidine 406.

It in the N-terminal section; belongs to the precorrin methyltransferase family. As to quaternary structure, homodimer. CeuMA2 automethylates at Thr-399, Thr-400, Ile-401, Val-402, Val-403, Ile-404, Val-405 and His-406 before being processed by a prolyloligopeptidase which likely forms a peptidyl ester upon removal of the follower propeptide, which then undergoes macrocyclization with the N-terminus of the modified core peptide. Peptide backbone alpha-N-methylations change the physicochemical properties of amide bonds to provide structural constraints and other favorable characteristics including biological membrane permeability to peptides.

Its pathway is secondary metabolite biosynthesis. Functionally, fusion protein of the methyltransferase ceuM2 and a type I borosin core peptide; part of the gene cluster that mediates the biosynthesis of a type I borosin, a highly methylated cyclic peptide with potent biological activities. Type I borosins derive from the C-terminus of the fusion protein, and it is the same protein that methylates its own C-terminus using S-adenosyl methionine (SAM). The C-terminus is subsequently cleaved off and macrocyclized by a prolyloligopeptidase to give the final product. The polypeptide is Methyltransferase/ribosomally synthesized type I borosin cyclic peptide precursor ceuMA2 (Cerrena unicolor (Canker rot fungus)).